Consider the following 518-residue polypeptide: Receptor-interacting serine/threonine-protein kinase 3 (518 aa).

S2 is modified (phosphoserine). Residues 21–287 (LENQELVGKG…ECLPKTDEVF (267 aa)) form the Protein kinase domain. 27–35 (VGKGGFGTV) contacts ATP. A Glycyl lysine isopeptide (Lys-Gly) (interchain with G-Cter in ubiquitin) cross-link involves residue K42. K50 lines the ATP pocket. Catalysis depends on D142, which acts as the Proton acceptor. Residue S164 is modified to Phosphoserine. A Phosphothreonine modification is found at T182. S199 and S227 each carry phosphoserine; by autocatalysis. At T252 the chain carries Phosphothreonine. The residue at position 299 (S299) is a Phosphoserine. Phosphothreonine is present on T333. Residues K351 and K363 each participate in a glycyl lysine isopeptide (Lys-Gly) (interchain with G-Cter in ubiquitin) cross-link. The tract at residues 355–443 (EEPPSSVPKK…WSCRTPEPNP (89 aa)) is disordered. Over residues 384-408 (TAGTSSDSMAQPPQTPETSTFRNQM) the composition is skewed to polar residues. S389 bears the Phosphoserine mark. T401 carries the phosphothreonine modification. The RIP homotypic interaction motif (RHIM) motif lies at 450–466 (VNIYNCSGVQVGDNNYL). The disordered stretch occupies residues 476-518 (TWGLAPSGKGRGLQHPPPVGSQEGPKDPEAWSRPQGWYNHSGK). A Glycyl lysine isopeptide (Lys-Gly) (interchain with G-Cter in ubiquitin) cross-link involves residue K518.

The protein belongs to the protein kinase superfamily. TKL Ser/Thr protein kinase family. As to quaternary structure, interacts (via RIP homotypic interaction motif) with RIPK1 (via RIP homotypic interaction motif); this interaction induces RIPK1 phosphorylation and formation of a RIPK1-RIPK3 necrosis-inducing complex. Interacts with MLKL; the interaction is direct and triggers necroptosis. Interacts with ZBP1 (via RIP homotypic interaction motif); interaction with ZBP1 activates RIPK3, triggering necroptosis. Upon TNF-induced necrosis, the RIPK1-RIPK3 dimer further interacts with PGAM5 and MLKL; the formation of this complex leads to PGAM5 phosphorylation and increase in PGAM5 phosphatase activity. Binds TRAF2 and is recruited to the TNFR-1 signaling complex. Interacts with PYGL, GLUL and GLUD1; these interactions result in activation of these metabolic enzymes. Interacts with BIRC2/c-IAP1, BIRC3/c-IAP2 and XIAP/BIRC4. Interacts with ARHGEF2. Interacts with PELI1 (via atypical FHA domain); the phosphorylated form at Thr-182 binds preferentially to PELI1. Interacts with BUB1B, TRAF2 and STUB1. Interacts with CASP6. Component of the AIM2 PANoptosome complex, a multiprotein complex that drives inflammatory cell death (PANoptosis). (Microbial infection) Interacts (via RIP homotypic interaction motif/RHIM) with herpes simplex virus 1/HHV-1 protein RIR1/ICP6 (via RHIM); this interaction may induce heteromeric amyloid assemblies and prevent necroptosis activation. In terms of assembly, (Microbial infection) Interacts (via RIP homotypic interaction motif/RHIM) with herpes simplex virus 2/HHV-2 protein RIR1/ICP10 (via RHIM); this interaction prevents necroptosis activation. In terms of processing, (Microbial infection) Proteolytically cleaved by S.flexneri OspD3 within the RIP homotypic interaction motif (RHIM), leading to its degradation and inhibition of necroptosis. Post-translationally, RIPK1 and RIPK3 undergo reciprocal auto- and trans-phosphorylation. Autophosphorylated following interaction with ZBP1. Phosphorylation of Ser-199 plays a role in the necroptotic function of RIPK3. Autophosphorylates at Ser-227 following activation by ZBP1: phosphorylation at these sites is a hallmark of necroptosis and is required for binding MLKL. Phosphorylation at Thr-182 is important for its kinase activity, interaction with PELI1 and PELI1-mediated 'Lys-48'-linked polyubiquitination and for its ability to mediate TNF-induced necroptosis. Polyubiquitinated with 'Lys-48' and 'Lys-63'-linked chains by BIRC2/c-IAP1 and BIRC3/c-IAP2, leading to activation of NF-kappa-B. Polyubiquitinated with 'Lys-48'-linked chains by PELI1 leading to its subsequent proteasome-dependent degradation. Ubiquitinated by STUB1 leading to its subsequent proteasome-dependent degradation. Deubiquitinated by USP22. In terms of tissue distribution, highly expressed in the pancreas. Detected at lower levels in heart, placenta, lung and kidney. As to expression, expression is significantly increased in colon and lung cancers.

The protein localises to the cytoplasm. Its subcellular location is the cytosol. The protein resides in the nucleus. The enzyme catalyses L-seryl-[protein] + ATP = O-phospho-L-seryl-[protein] + ADP + H(+). It catalyses the reaction L-threonyl-[protein] + ATP = O-phospho-L-threonyl-[protein] + ADP + H(+). Activity is stimulated by ZBP1, which senses double-stranded Z-RNA structures. RIPK3-dependent necroptosis is inhibited by RIPK1: RIPK1 prevents the ZBP1-induced activation of RIPK3 via FADD-mediated recruitment of CASP8, which cleaves RIPK1 and limits TNF-induced necroptosis. Its function is as follows. Serine/threonine-protein kinase that activates necroptosis and apoptosis, two parallel forms of cell death. Necroptosis, a programmed cell death process in response to death-inducing TNF-alpha family members, is triggered by RIPK3 following activation by ZBP1. Activated RIPK3 forms a necrosis-inducing complex and mediates phosphorylation of MLKL, promoting MLKL localization to the plasma membrane and execution of programmed necrosis characterized by calcium influx and plasma membrane damage. In addition to TNF-induced necroptosis, necroptosis can also take place in the nucleus in response to orthomyxoviruses infection: following ZBP1 activation, which senses double-stranded Z-RNA structures, nuclear RIPK3 catalyzes phosphorylation and activation of MLKL, promoting disruption of the nuclear envelope and leakage of cellular DNA into the cytosol. Also regulates apoptosis: apoptosis depends on RIPK1, FADD and CASP8, and is independent of MLKL and RIPK3 kinase activity. Phosphorylates RIPK1: RIPK1 and RIPK3 undergo reciprocal auto- and trans-phosphorylation. In some cell types, also able to restrict viral replication by promoting cell death-independent responses. In response to Zika virus infection in neurons, promotes a cell death-independent pathway that restricts viral replication: together with ZBP1, promotes a death-independent transcriptional program that modifies the cellular metabolism via up-regulation expression of the enzyme ACOD1/IRG1 and production of the metabolite itaconate. Itaconate inhibits the activity of succinate dehydrogenase, generating a metabolic state in neurons that suppresses replication of viral genomes. RIPK3 binds to and enhances the activity of three metabolic enzymes: GLUL, GLUD1, and PYGL. These metabolic enzymes may eventually stimulate the tricarboxylic acid cycle and oxidative phosphorylation, which could result in enhanced ROS production. (Microbial infection) In case of herpes simplex virus 1/HHV-1 infection, forms heteromeric amyloid structures with HHV-1 protein RIR1/ICP6 which may inhibit RIPK3-mediated necroptosis, thereby preventing host cell death pathway and allowing viral evasion. The chain is Receptor-interacting serine/threonine-protein kinase 3 from Homo sapiens (Human).